We begin with the raw amino-acid sequence, 411 residues long: UPF0761 membrane protein PA14_51960 (411 aa).

6 helical membrane passes run 36-56, 92-112, 132-152, 174-194, 207-229, and 244-264; these read LFAVVPMMTVMFSMLSLIPAF, HLTWVGVVFLAVTAFTMLVTI, FLLYWAILSLGPLLLGAGFAV, LLGLMPLAFSVAAFTLLYSAV, GGVFTAVLFEAAKTLFGLYVSLF, and IFLLWIYLSWMIVLFGAVLVC.

This sequence belongs to the UPF0761 family.

It localises to the cell inner membrane. This chain is UPF0761 membrane protein PA14_51960, found in Pseudomonas aeruginosa (strain UCBPP-PA14).